Here is a 228-residue protein sequence, read N- to C-terminus: Histidine/lysine/arginine/ornithine transport system permease protein HisQ (228 aa).

The Periplasmic portion of the chain corresponds to 1 to 12 (MLYGFSGVILQG). The helical transmembrane segment at 13 to 33 (ALVTLELAISSVVLAVIIGLI) threads the bilayer. Residues 13–212 (ALVTLELAIS…VFTTVSNGVL (200 aa)) form the ABC transmembrane type-1 domain. Over 34-58 (GAGGKLSQNRLSGLIFEGYTTLIRG) the chain is Cytoplasmic. Residues 59–79 (VPDLVLMLLIFYGLQIALNTV) form a helical membrane-spanning segment. Over 80–87 (TEAMGVGQ) the chain is Periplasmic. The chain crosses the membrane as a helical span at residues 88–108 (IDIDPMVAGIITLGFIYGAYF). At 109-148 (TETFRGAFMAVPKGHIEAATAFGFTRGQVFRRIMFPSMMR) the chain is on the cytoplasmic side. The chain crosses the membrane as a helical span at residues 149–171 (YALPGIGNNWQVILKSTALVSLL). The Periplasmic segment spans residues 172–194 (GLEDVVKATQLAGKSTWEPFYFA). Residues 195–215 (IVCGVIYLVFTTVSNGVLLFL) form a helical membrane-spanning segment. At 216–228 (ERRYSVGVKRADL) the chain is on the cytoplasmic side.

It belongs to the binding-protein-dependent transport system permease family. HisMQ subfamily. In terms of assembly, the HisPMQJ complex is composed of two ATP-binding proteins (HisP), two transmembrane proteins (HisM and HisQ) and a solute-binding protein (HisJ). The HisPMQ-ArgT complex is composed of two ATP-binding proteins (HisP), two transmembrane proteins (HisM and HisQ) and a solute-binding protein (ArgT).

It localises to the cell inner membrane. Functionally, part of the ABC transporter complex HisPMQJ involved in histidine transport. Is also part of the ABC transporter complex HisPMQ-ArgT involved in lysine/arginine/ornithine transport. Probably responsible for the translocation of the substrate across the membrane. This is Histidine/lysine/arginine/ornithine transport system permease protein HisQ (hisQ) from Escherichia coli (strain K12).